The primary structure comprises 148 residues: Large ribosomal subunit protein bL9 (148 aa).

The protein belongs to the bacterial ribosomal protein bL9 family.

Functionally, binds to the 23S rRNA. This is Large ribosomal subunit protein bL9 from Alkaliphilus oremlandii (strain OhILAs) (Clostridium oremlandii (strain OhILAs)).